A 463-amino-acid polypeptide reads, in one-letter code: Quinolone resistance protein NorB (463 aa).

14 helical membrane passes run Ile19–Ile39, Ile53–Ala73, Ile86–Ile106, Ile107–Ile127, Tyr142–Ala162, Leu165–Ile185, Phe201–Thr221, Ser230–Leu250, Thr273–Val293, Tyr299–Ile319, Pro334–Leu354, Ile357–Tyr377, Met403–Val423, and Ile435–Val455.

This sequence belongs to the major facilitator superfamily. TCR/Tet family.

Its subcellular location is the cell membrane. Multidrug efflux pump that acts independently of NorA and is one of the factors that confers resistance against diverse quinolones and chemical compounds. The polypeptide is Quinolone resistance protein NorB (norB) (Staphylococcus aureus (strain bovine RF122 / ET3-1)).